Here is a 227-residue protein sequence, read N- to C-terminus: Cytochrome c oxidase subunit 2 (227 aa).

Residues 1–14 lie on the Mitochondrial intermembrane side of the membrane; sequence MALPFQLGFQDATS. A helical membrane pass occupies residues 15–45; the sequence is PIMEELLHFHDHTLMIVFMISSLVLYLISSM. Residues 46–59 lie on the Mitochondrial matrix side of the membrane; it reads LTTRLTHTSTMDAQ. Residues 60 to 87 traverse the membrane as a helical segment; sequence EVETIWTILPAIILITIALPSLRILYMM. The Mitochondrial intermembrane portion of the chain corresponds to 88 to 227; the sequence is DEINNPSMTI…CFEKWSTSML (140 aa). Cu cation contacts are provided by histidine 161, cysteine 196, glutamate 198, cysteine 200, histidine 204, and methionine 207. Mg(2+) is bound at residue glutamate 198.

The protein belongs to the cytochrome c oxidase subunit 2 family. In terms of assembly, component of the cytochrome c oxidase (complex IV, CIV), a multisubunit enzyme composed of 14 subunits. The complex is composed of a catalytic core of 3 subunits MT-CO1, MT-CO2 and MT-CO3, encoded in the mitochondrial DNA, and 11 supernumerary subunits COX4I, COX5A, COX5B, COX6A, COX6B, COX6C, COX7A, COX7B, COX7C, COX8 and NDUFA4, which are encoded in the nuclear genome. The complex exists as a monomer or a dimer and forms supercomplexes (SCs) in the inner mitochondrial membrane with NADH-ubiquinone oxidoreductase (complex I, CI) and ubiquinol-cytochrome c oxidoreductase (cytochrome b-c1 complex, complex III, CIII), resulting in different assemblies (supercomplex SCI(1)III(2)IV(1) and megacomplex MCI(2)III(2)IV(2)). Found in a complex with TMEM177, COA6, COX18, COX20, SCO1 and SCO2. Interacts with TMEM177 in a COX20-dependent manner. Interacts with COX20. Interacts with COX16. The cofactor is Cu cation.

It localises to the mitochondrion inner membrane. The catalysed reaction is 4 Fe(II)-[cytochrome c] + O2 + 8 H(+)(in) = 4 Fe(III)-[cytochrome c] + 2 H2O + 4 H(+)(out). In terms of biological role, component of the cytochrome c oxidase, the last enzyme in the mitochondrial electron transport chain which drives oxidative phosphorylation. The respiratory chain contains 3 multisubunit complexes succinate dehydrogenase (complex II, CII), ubiquinol-cytochrome c oxidoreductase (cytochrome b-c1 complex, complex III, CIII) and cytochrome c oxidase (complex IV, CIV), that cooperate to transfer electrons derived from NADH and succinate to molecular oxygen, creating an electrochemical gradient over the inner membrane that drives transmembrane transport and the ATP synthase. Cytochrome c oxidase is the component of the respiratory chain that catalyzes the reduction of oxygen to water. Electrons originating from reduced cytochrome c in the intermembrane space (IMS) are transferred via the dinuclear copper A center (CU(A)) of subunit 2 and heme A of subunit 1 to the active site in subunit 1, a binuclear center (BNC) formed by heme A3 and copper B (CU(B)). The BNC reduces molecular oxygen to 2 water molecules using 4 electrons from cytochrome c in the IMS and 4 protons from the mitochondrial matrix. The sequence is that of Cytochrome c oxidase subunit 2 (MT-CO2) from Phyllostomus hastatus (Greater spear-nosed bat).